The following is a 153-amino-acid chain: Ubiquitin/ISG15-conjugating enzyme E2 L6 (153 aa).

The UBC core domain occupies 2–149 (MASKRVAKEL…AEEFTLKFGV (148 aa)). The active-site Glycyl thioester intermediate is Cys-86.

This sequence belongs to the ubiquitin-conjugating enzyme family. In terms of assembly, interacts with RNF19A, RNF19B and RNF144B. Interacts with FLT3 (tyrosine phosphorylated). ISGylated.

The enzyme catalyses S-ubiquitinyl-[E1 ubiquitin-activating enzyme]-L-cysteine + [E2 ubiquitin-conjugating enzyme]-L-cysteine = [E1 ubiquitin-activating enzyme]-L-cysteine + S-ubiquitinyl-[E2 ubiquitin-conjugating enzyme]-L-cysteine.. It functions in the pathway protein modification; protein ubiquitination. Its function is as follows. Catalyzes the covalent attachment of ubiquitin or ISG15 to other proteins. Functions in the E6/E6-AP-induced ubiquitination of p53/TP53. Promotes ubiquitination and subsequent proteasomal degradation of FLT3. This is Ubiquitin/ISG15-conjugating enzyme E2 L6 (Ube2l6) from Mus musculus (Mouse).